We begin with the raw amino-acid sequence, 219 residues long: Protein VERNALIZATION 2 (219 aa).

Residues 138 to 180 form the CCT domain; it reads REAKVMRYREKKKRRRYEKQIRYESRKAYAEMRPRVKGRFAKV.

Mainly expressed in leaves, and at low levels in the shoot apical meristem (SAM).

Its subcellular location is the nucleus. In terms of biological role, involved in the regulation of vernalization; this process in essential for flowering in cv. Bd29-1 but seems do not occur in cv. Bd21. The chain is Protein VERNALIZATION 2 from Brachypodium distachyon (Purple false brome).